A 1439-amino-acid chain; its full sequence is Receptor-type tyrosine-protein phosphatase kappa (1439 aa).

An N-terminal signal peptide occupies residues 1–26 (MDTTAAAALPAFVALLLLSPWPLLGS). Residues 27-752 (AQGQFSAGGC…PAKQTDRVVK (726 aa)) lie on the Extracellular side of the membrane. Positions 31–194 (FSAGGCTFDD…IQVLSYPCDK (164 aa)) constitute an MAM domain. N-linked (GlcNAc...) asparagine glycans are attached at residues asparagine 101, asparagine 140, and asparagine 211. The region spanning 196–281 (PHFLRLGDVE…TQSERGSGVS (86 aa)) is the Ig-like C2-type domain. A disulfide bridge connects residues cysteine 216 and cysteine 270. 4 Fibronectin type-III domains span residues 294–389 (PIAP…CAEP), 392–488 (TPKT…TDED), 491–595 (GPVP…SAPT), and 597–680 (PDYE…GNLP). N-linked (GlcNAc...) asparagine glycans are attached at residues asparagine 416, asparagine 424, asparagine 436, asparagine 462, asparagine 552, asparagine 586, asparagine 590, asparagine 607, and asparagine 690. A helical transmembrane segment spans residues 753-774 (IAGISAGILVFILLLLVVILIV). Over 775–1439 (KKSKLAKKRK…DVALEYLESS (665 aa)) the chain is Cytoplasmic. A Phosphoserine modification is found at serine 856. 2 Tyrosine-protein phosphatase domains span residues 887 to 1141 (FKEE…ILEA) and 1173 to 1435 (LKDE…ALEY). Residues aspartate 1050, 1082–1088 (CSAGAGR), and glutamine 1126 contribute to the substrate site. Catalysis depends on cysteine 1082, which acts as the Phosphocysteine intermediate. The active-site Phosphocysteine intermediate is cysteine 1376.

Belongs to the protein-tyrosine phosphatase family. Receptor class 2B subfamily. Post-translationally, this protein undergoes proteolytic processing. In terms of tissue distribution, high levels in lung, brain and colon; less in liver, pancreas, stomach, kidney, placenta and mammary carcinoma.

The protein localises to the cell junction. It is found in the adherens junction. The protein resides in the cell membrane. It catalyses the reaction O-phospho-L-tyrosyl-[protein] + H2O = L-tyrosyl-[protein] + phosphate. In terms of biological role, regulation of processes involving cell contact and adhesion such as growth control, tumor invasion, and metastasis. Negative regulator of EGFR signaling pathway. Forms complexes with beta-catenin and gamma-catenin/plakoglobin. Beta-catenin may be a substrate for the catalytic activity of PTPRK/PTP-kappa. The polypeptide is Receptor-type tyrosine-protein phosphatase kappa (PTPRK) (Homo sapiens (Human)).